Here is a 248-residue protein sequence, read N- to C-terminus: Ribosomal RNA small subunit methyltransferase J (248 aa).

S-adenosyl-L-methionine-binding positions include 101 to 102, 117 to 118, 153 to 154, and D171; these read RD, ER, and SS.

This sequence belongs to the methyltransferase superfamily. RsmJ family.

The protein localises to the cytoplasm. The catalysed reaction is guanosine(1516) in 16S rRNA + S-adenosyl-L-methionine = N(2)-methylguanosine(1516) in 16S rRNA + S-adenosyl-L-homocysteine + H(+). Functionally, specifically methylates the guanosine in position 1516 of 16S rRNA. This Pectobacterium atrosepticum (strain SCRI 1043 / ATCC BAA-672) (Erwinia carotovora subsp. atroseptica) protein is Ribosomal RNA small subunit methyltransferase J.